The sequence spans 95 residues: MSAITRQDEDLLLALYVQPKASRDELVGLHGEELKLAITAPPVDGKANAHICKLLAKAFKVPKGKVSIERGELGRHKLVRIQAPEIIPDDFAQFL.

The protein belongs to the UPF0235 family.

This is UPF0235 protein Sama_2480 from Shewanella amazonensis (strain ATCC BAA-1098 / SB2B).